Here is a 985-residue protein sequence, read N- to C-terminus: Ephrin type-B receptor 1-A (985 aa).

The first 19 residues, 1–19, serve as a signal peptide directing secretion; sequence MELNVLLLLLCLSGGQVGA. At 20 to 542 the chain is on the extracellular side; that stretch reads VEETLMDTRT…YKSELREQLP (523 aa). The 183-residue stretch at 21 to 203 folds into the Eph LBD domain; the sequence is EETLMDTRTA…FFKEMPSVVQ (183 aa). Fibronectin type-III domains are found at residues 324 to 434 and 435 to 532; these read VPSG…TNQA and APSS…TAED. N-linked (GlcNAc...) asparagine glycosylation is found at Asn336, Asn428, and Asn482. Residues 543-563 form a helical membrane-spanning segment; it reads LTGSAAAGVVFIVSLVAISIV. At 564 to 985 the chain is on the cytoplasmic side; the sequence is CSRKRTYSKE…QITQSPTSIA (422 aa). A Protein kinase domain is found at 620 to 883; sequence VKIEEVIGAG…EIVNTLRPMI (264 aa). ATP contacts are provided by residues 626–634 and Lys652; that span reads IGAGEFGEV. Asp745 acts as the Proton acceptor in catalysis. Residues 912–976 enclose the SAM domain; the sequence is SAFTSVDDWL…LNSIQSMRVQ (65 aa). Residues 983–985 carry the PDZ-binding motif; the sequence is SIA.

Belongs to the protein kinase superfamily. Tyr protein kinase family. Ephrin receptor subfamily. Heterotetramer upon binding of the ligand. The heterotetramer is composed of an ephrin dimer and a receptor dimer. Oligomerization is probably required to induce biological responses. In terms of processing, phosphorylated. Autophosphorylation is stimulated by ligands.

Its subcellular location is the cell membrane. It is found in the early endosome membrane. The protein localises to the cell projection. It localises to the dendrite. It carries out the reaction L-tyrosyl-[protein] + ATP = O-phospho-L-tyrosyl-[protein] + ADP + H(+). In terms of biological role, receptor tyrosine kinase which binds promiscuously transmembrane ephrin-B family ligands residing on adjacent cells, leading to contact-dependent bidirectional signaling into neighboring cells. The signaling pathway downstream of the receptor is referred to as forward signaling while the signaling pathway downstream of the ephrin ligand is referred to as reverse signaling. May play a role in axon guidance during nervous system development. May also play an important redundant role with other ephrin-B receptors in development and maturation of dendritic spines and synapse formation. More generally, may play a role in targeted cell migration and adhesion. Upon activation by ephrin-B ligands activates the MAPK/ERK and the JNK signaling cascades to regulate cell migration and adhesion respectively. This Xenopus laevis (African clawed frog) protein is Ephrin type-B receptor 1-A (ephb1-a).